The chain runs to 632 residues: MAEETQHNKLAAAKKKLKEYWQKNRPRVPAGVNRNRKTNGSIPETATSGGCQPPGDSATGFHREGPTSSATLKDLESPCQERAVVLDSTSVKISRLKNTIKSLKQQKKQVEHQLEEEKKANNERQKAERELEVQIQTLIIQKEELNTDLYHMERSLRYFEEESKDLAVRLQHSLQCKGELESALSAVIATEKKKANQLSSCSKAHTEWELEQSLQDQALLKAQLTQLKESFQQLQLERDECAEHIEGERARWHQRMSKMSQEICTLKKEKQQDMRRVEELERSLSKLKNQMAEPLPPEPPAVPSEVELQHLRKELERVAGELQSQVKNNQHISLLNRRQEERIREQEERLRKQEERLQEQHEKLRQLAKPQSVFEELNNENKSTLQLEQQVKELQEKLGEEHLEAASQQNQQLTAQLSLMALPGEGHGGEHLDSEGEEAPQPMPSVPEDLESREAMSSFMDHLKEKADLSELVKKQELRFIQYWQERCHQKIHHLLSEPGGRAKDAALGGGHHQAGAQGGDEGEAAGAAADGIAAYSNYNNGHRKFLAAAHNSADEPGPGAPAPQELGAADKHGDLREVTLTSSAQGEAREDPLLDKPTAQPIVQDHQEHPGLGSNCCVPLFCWAWLPRRRR.

The tract at residues 1–76 is disordered; that stretch reads MAEETQHNKL…TSSATLKDLE (76 aa). A compositionally biased stretch (polar residues) spans 38 to 50; that stretch reads TNGSIPETATSGG. Coiled-coil stretches lie at residues 85–150 and 209–421; these read VLDS…TDLY and ELEQ…SLMA. Disordered stretches follow at residues 423–445, 505–524, and 552–573; these read PGEG…PMPS, DAAL…DEGE, and NSAD…ADKH. Over residues 508 to 520 the composition is skewed to gly residues; that stretch reads LGGGHHQAGAQGG.

The protein belongs to the GOLGA8 family.

This is Golgin subfamily A member 8N from Homo sapiens (Human).